Consider the following 408-residue polypeptide: Succinylornithine transaminase (408 aa).

K252 carries the post-translational modification N6-(pyridoxal phosphate)lysine.

Belongs to the class-III pyridoxal-phosphate-dependent aminotransferase family. AstC subfamily. Pyridoxal 5'-phosphate serves as cofactor.

The catalysed reaction is N(2)-succinyl-L-ornithine + 2-oxoglutarate = N-succinyl-L-glutamate 5-semialdehyde + L-glutamate. It functions in the pathway amino-acid degradation; L-arginine degradation via AST pathway; L-glutamate and succinate from L-arginine: step 3/5. Its function is as follows. Catalyzes the transamination of N(2)-succinylornithine and alpha-ketoglutarate into N(2)-succinylglutamate semialdehyde and glutamate. Can also act as an acetylornithine aminotransferase. The chain is Succinylornithine transaminase from Salmonella paratyphi B (strain ATCC BAA-1250 / SPB7).